The sequence spans 610 residues: Aspercryptin biosynthesis cluster-specific transcription regulator atnN (610 aa).

A compositionally biased stretch (polar residues) spans methionine 1–serine 26. The disordered stretch occupies residues methionine 1–arginine 27. The segment at residues cysteine 30–cysteine 57 is a DNA-binding region (zn(2)-C6 fungal-type). 2 disordered regions span residues threonine 61 to serine 81 and alanine 427 to proline 493. Composition is skewed to low complexity over residues glutamine 66 to alanine 79 and serine 437 to proline 474.

The protein resides in the nucleus. Its function is as follows. Transcription factor that positively regulates the cluster that mediate the production of aspercryptins, linear lipopeptides built from six amino acids including 2 highly unusual and nonproteogenic amino acids, 2-amino-octanoic acid (2aoa) and 2-amino-dodecanol (2adol). This chain is Aspercryptin biosynthesis cluster-specific transcription regulator atnN, found in Emericella nidulans (strain FGSC A4 / ATCC 38163 / CBS 112.46 / NRRL 194 / M139) (Aspergillus nidulans).